Here is a 139-residue protein sequence, read N- to C-terminus: Small ribosomal subunit protein uS12 (139 aa).

Residues 12–55 (RVDKVKKSDSPALNKGYNSFKKSQTDVSSPQKRGVCTRVGTMTP) form a disordered region. Polar residues predominate over residues 27 to 42 (GYNSFKKSQTDVSSPQ). Residue aspartate 102 is modified to 3-methylthioaspartic acid. Residues 119-139 (GVQNRMQGRSKYGTKKPKDKK) are disordered. Basic residues predominate over residues 130 to 139 (YGTKKPKDKK).

This sequence belongs to the universal ribosomal protein uS12 family. Part of the 30S ribosomal subunit. Contacts proteins S8 and S17. May interact with IF1 in the 30S initiation complex.

Its function is as follows. With S4 and S5 plays an important role in translational accuracy. In terms of biological role, interacts with and stabilizes bases of the 16S rRNA that are involved in tRNA selection in the A site and with the mRNA backbone. Located at the interface of the 30S and 50S subunits, it traverses the body of the 30S subunit contacting proteins on the other side and probably holding the rRNA structure together. The combined cluster of proteins S8, S12 and S17 appears to hold together the shoulder and platform of the 30S subunit. This Shouchella clausii (strain KSM-K16) (Alkalihalobacillus clausii) protein is Small ribosomal subunit protein uS12.